Consider the following 343-residue polypeptide: N-acetyl-gamma-glutamyl-phosphate reductase (343 aa).

Cys-146 is a catalytic residue.

The protein belongs to the NAGSA dehydrogenase family. Type 1 subfamily.

It is found in the cytoplasm. The catalysed reaction is N-acetyl-L-glutamate 5-semialdehyde + phosphate + NADP(+) = N-acetyl-L-glutamyl 5-phosphate + NADPH + H(+). The protein operates within amino-acid biosynthesis; L-arginine biosynthesis; N(2)-acetyl-L-ornithine from L-glutamate: step 3/4. Catalyzes the NADPH-dependent reduction of N-acetyl-5-glutamyl phosphate to yield N-acetyl-L-glutamate 5-semialdehyde. The protein is N-acetyl-gamma-glutamyl-phosphate reductase of Arthrobacter sp. (strain FB24).